The following is a 264-amino-acid chain: Low molecular mass lipoprotein PBMHP-12 (264 aa).

The signal sequence occupies residues 1 to 16 (MKLLVVFAMCVPAASA).

The protein belongs to the 30 kDa lipoprotein family.

Its subcellular location is the secreted. The protein is Low molecular mass lipoprotein PBMHP-12 of Bombyx mori (Silk moth).